The sequence spans 386 residues: Cytochrome b (386 aa).

Transmembrane regions (helical) follow at residues 32-52 (FGSLLALCLIIQIVTGVTLAM), 76-98 (WLIRYLHANTASAFFFLVYLHVG), 113-133 (TWIIGSIILIVMMATAFLGYV), and 179-199 (FFALHFVLPFVLAALVIMHLI). Residues H82 and H96 each coordinate heme b. 2 residues coordinate heme b: H183 and H197. A ubiquinone is bound at residue H202. The next 4 membrane-spanning stretches (helical) occupy residues 226-246 (YIFKDLITIFLFFFVLSLFVF), 290-310 (LLGVIAMFSAILIILVMPITD), 322-342 (LSKVAFYVFVANFLILMQLGA), and 349-369 (FIEFGQISTVLYFSHFLVIMP).

Belongs to the cytochrome b family. As to quaternary structure, fungal cytochrome b-c1 complex contains 10 subunits; 3 respiratory subunits, 2 core proteins and 5 low-molecular weight proteins. Cytochrome b-c1 complex is a homodimer. It depends on heme b as a cofactor.

The protein localises to the mitochondrion inner membrane. Component of the ubiquinol-cytochrome c reductase complex (complex III or cytochrome b-c1 complex) that is part of the mitochondrial respiratory chain. The b-c1 complex mediates electron transfer from ubiquinol to cytochrome c. Contributes to the generation of a proton gradient across the mitochondrial membrane that is then used for ATP synthesis. In Talaromyces marneffei (Penicillium marneffei), this protein is Cytochrome b (cob).